The primary structure comprises 70 residues: Cold shock-like protein CspJ (70 aa).

A CSD domain is found at 7–67; the sequence is GLVKWFNPEK…GPKGPSAVNV (61 aa).

It is found in the cytoplasm. This Salmonella typhimurium (strain SL1344) protein is Cold shock-like protein CspJ (cspJ).